Consider the following 671-residue polypeptide: DNA ligase (671 aa).

NAD(+)-binding positions include 32–36 (DAEYD), 81–82 (SL), and Glu113. The active-site N6-AMP-lysine intermediate is Lys115. The NAD(+) site is built by Arg136, Glu173, Lys290, and Lys314. 4 residues coordinate Zn(2+): Cys408, Cys411, Cys426, and Cys432. Residues 593–671 (EIDSPFAGKT…EAEMIRLLGA (79 aa)) enclose the BRCT domain.

The protein belongs to the NAD-dependent DNA ligase family. LigA subfamily. The cofactor is Mg(2+). Requires Mn(2+) as cofactor.

The enzyme catalyses NAD(+) + (deoxyribonucleotide)n-3'-hydroxyl + 5'-phospho-(deoxyribonucleotide)m = (deoxyribonucleotide)n+m + AMP + beta-nicotinamide D-nucleotide.. Its function is as follows. DNA ligase that catalyzes the formation of phosphodiester linkages between 5'-phosphoryl and 3'-hydroxyl groups in double-stranded DNA using NAD as a coenzyme and as the energy source for the reaction. It is essential for DNA replication and repair of damaged DNA. The polypeptide is DNA ligase (Salmonella paratyphi B (strain ATCC BAA-1250 / SPB7)).